The primary structure comprises 288 residues: Syntaxin-1A (288 aa).

The Cytoplasmic portion of the chain corresponds to 1 to 265; sequence MKDRTQELRT…KYQSKARRKK (265 aa). Ser-14, Ser-64, and Ser-95 each carry phosphoserine. Residues 68-109 are a coiled coil; that stretch reads DEKTKEELEELMSDIKKTANKVRSKLKSIEQSIEQEEGLNRS. Residue Ser-188 is modified to Phosphoserine; by DAPK1. Positions 192–254 constitute a t-SNARE coiled-coil homology domain; it reads LSEIETRHSE…ERAVSDTKKA (63 aa). Residues Lys-252, Lys-253, and Lys-256 each participate in a glycyl lysine isopeptide (Lys-Gly) (interchain with G-Cter in SUMO) cross-link. Residues 266-286 traverse the membrane as a helical; Anchor for type IV membrane protein segment; sequence IMIIICCVIPGIVIASTVGGI. Topologically, residues 287-288 are extracellular; the sequence is FA.

This sequence belongs to the syntaxin family. Part of the SNARE core complex containing SNAP25, VAMP2 and STX1A; this complex constitutes the basic catalytic machinery of the complex neurotransmitter release apparatus. The SNARE complex interacts with CPLX1. Interacts with STXBP1. The interaction with STXBP1 promotes assembly of the SNARE complex. Interacts (via C-terminus) with KCNB1 (via C-terminus); the interaction increases in a calcium-dependent manner and induces a pore-independent enhancement of exocytosis in neuroendocrine cells, chromaffin cells, pancreatic beta cells and from the soma of dorsal root ganglia (DRG) neurons. Interacts with SYTL4. Interacts with STXBP6. Interacts with PLCL1 (via C2 domain). Interacts with OTOF. Interacts with LGI3. Interacts (via the H3 domain) with SLC6A4 (via the N-terminus); this interaction regulates SLC4A6 channel conductance in thalamocortical neurons. Interacts with SYT6 and SYT8; the interaction is Ca(2+)-dependent. Interacts with VAMP8. Interacts with SNAP23. Interacts with VAPA and SYBU. Interacts with PRRT2. Interacts with SEPT8. Interacts with STXBP5L. Interacts with synaptotagmin-1/SYT1. Interacts with SEPTIN5; in the cerebellar cortex. Interacts with SEPTIN4; in the striatum. In terms of processing, phosphorylated by CK2. Phosphorylation at Ser-188 by DAPK1 significantly decreases its interaction with STXBP1. Sumoylated, sumoylation is required for regulation of synaptic vesicle endocytosis.

The protein resides in the cytoplasmic vesicle. It localises to the secretory vesicle. It is found in the synaptic vesicle membrane. Its subcellular location is the cell membrane. The protein localises to the synapse. The protein resides in the synaptosome. Functionally, plays an essential role in hormone and neurotransmitter calcium-dependent exocytosis and endocytosis. Part of the SNARE (Soluble NSF Attachment Receptor) complex composed of SNAP25, STX1A and VAMP2 which mediates the fusion of synaptic vesicles with the presynaptic plasma membrane. STX1A and SNAP25 are localized on the plasma membrane while VAMP2 resides in synaptic vesicles. The pairing of the three SNAREs from the N-terminal SNARE motifs to the C-terminal anchors leads to the formation of the SNARE complex, which brings membranes into close proximity and results in final fusion. Participates in the calcium-dependent regulation of acrosomal exocytosis in sperm. Also plays an important role in the exocytosis of hormones such as insulin or glucagon-like peptide 1 (GLP-1). This Pongo abelii (Sumatran orangutan) protein is Syntaxin-1A (STX1A).